Here is a 500-residue protein sequence, read N- to C-terminus: MNDFPWLTIIVGFPISAGSLMLFLPHKGNKVNKWYTICICILELLITTYAFCYNFKMDDPLIQMSEDYKWINFFDFYWRLGIDGLSIGTILLTGFITTLAALAAFPVTRDSRFFHFLMLAMYSGQIGSFSSRDLLLFFIMWELELIPVYLLLSMWGGKKRLYSATKFILYTAGSSIFLLIGVLGISLYGSNEPTLNLELLANQSYPVTLEILFYIGFLIAFAVKSPIIPLHTWLPDTHGEAHYSTCMLLAGILLKMGAYGLVRINMELLPHAHSMFSPWLMVVGTIQIIYAASTSPGQRNLKKRIAYSSVSHMGFIIIGIGSITDPGLNGAILQIISHGFIGAALFFLAGTSYDRIRLIYLDEMGGTAISIPKIFTMFTILSMASLALPGMSGFVAELIVFFGIITSQKYFLISKILIIFVMAIGMILTPIYLLSMSRQMFYGYKLINVKNLSFFDSGPRELFLSISILLPIIGIGIYPDFVLSLASDKVESILSNYFYG.

Transmembrane regions (helical) follow at residues 4 to 24, 35 to 55, 87 to 107, 113 to 130, 134 to 154, 167 to 187, 211 to 231, 242 to 262, 272 to 292, 305 to 325, 330 to 350, 386 to 406, 416 to 436, and 462 to 482; these read FPWL…MLFL, YTIC…CYNF, IGTI…AFPV, FFHF…GSFS, LLLF…LLSM, FILY…GISL, ILFY…IPLH, HYST…YGLV, AHSM…IYAA, IAYS…SITD, GAIL…FLAG, LALP…GIIT, ILII…LLSM, and LFLS…PDFV.

Belongs to the complex I subunit 4 family.

It is found in the plastid. The protein localises to the chloroplast thylakoid membrane. It catalyses the reaction a plastoquinone + NADH + (n+1) H(+)(in) = a plastoquinol + NAD(+) + n H(+)(out). The catalysed reaction is a plastoquinone + NADPH + (n+1) H(+)(in) = a plastoquinol + NADP(+) + n H(+)(out). This Arabis hirsuta (Hairy rock-cress) protein is NAD(P)H-quinone oxidoreductase chain 4, chloroplastic.